The sequence spans 190 residues: dCTP deaminase (190 aa).

Residues Lys111–Arg116, Thr135–Glu137, Gln156, Tyr172, and Gln182 each bind dCTP. The Proton donor/acceptor role is filled by Glu137.

The protein belongs to the dCTP deaminase family. In terms of assembly, homotrimer.

The catalysed reaction is dCTP + H2O + H(+) = dUTP + NH4(+). It participates in pyrimidine metabolism; dUMP biosynthesis; dUMP from dCTP (dUTP route): step 1/2. In terms of biological role, catalyzes the deamination of dCTP to dUTP. The polypeptide is dCTP deaminase (Stenotrophomonas maltophilia (strain K279a)).